Here is a 57-residue protein sequence, read N- to C-terminus: uncharacterized protein (57 aa).

A helical transmembrane segment spans residues 34 to 54; that stretch reads AALLDAAALVVIPGLLTAAAV.

The protein localises to the membrane. This is an uncharacterized protein from Dictyostelium discoideum (Social amoeba).